A 248-amino-acid polypeptide reads, in one-letter code: Type III pantothenate kinase (248 aa).

8-15 contacts ATP; sequence DAGNTRTK. Substrate is bound by residues Y87 and 94-97; that span reads GVDR. D96 (proton acceptor) is an active-site residue. T119 serves as a coordination point for ATP. Residue T173 coordinates substrate.

It belongs to the type III pantothenate kinase family. Homodimer. Requires NH4(+) as cofactor. K(+) is required as a cofactor.

The protein resides in the cytoplasm. It carries out the reaction (R)-pantothenate + ATP = (R)-4'-phosphopantothenate + ADP + H(+). It functions in the pathway cofactor biosynthesis; coenzyme A biosynthesis; CoA from (R)-pantothenate: step 1/5. Functionally, catalyzes the phosphorylation of pantothenate (Pan), the first step in CoA biosynthesis. In Methylobacillus flagellatus (strain ATCC 51484 / DSM 6875 / VKM B-1610 / KT), this protein is Type III pantothenate kinase.